A 1014-amino-acid chain; its full sequence is Endogenous retrovirus group K member 10 Pol protein (1014 aa).

The Reverse transcriptase domain occupies leucine 57–isoleucine 245. Residues leucine 161–glycine 164 carry the LPQG motif. A YXDD motif is present at residues tyrosine 195–aspartate 198. The region spanning leucine 460–isoleucine 590 is the RNase H type-1 domain. Residues aspartate 469, glutamate 497, aspartate 517, and aspartate 582 each coordinate Mg(2+). Residues serine 587–glutamine 628 form an Integrase-type zinc finger. Zn(2+) is bound by residues histidine 596, histidine 600, cysteine 624, and cysteine 627. In terms of domain architecture, Integrase catalytic spans arginine 642 to lysine 803. The segment at residues lysine 811–glutamate 859 is a DNA-binding region (integrase-type).

It belongs to the beta type-B retroviral polymerase family. HERV class-II K(HML-2) pol subfamily.

It carries out the reaction DNA(n) + a 2'-deoxyribonucleoside 5'-triphosphate = DNA(n+1) + diphosphate. The catalysed reaction is Endonucleolytic cleavage to 5'-phosphomonoester.. Its function is as follows. Early post-infection, the reverse transcriptase converts the viral RNA genome into double-stranded viral DNA. The RNase H domain of the reverse transcriptase performs two functions. It degrades the RNA template and specifically removes the RNA primer from the RNA/DNA hybrid. Following nuclear import, the integrase catalyzes the insertion of the linear, double-stranded viral DNA into the host cell chromosome. Endogenous Pol proteins may have kept, lost or modified their original function during evolution. The sequence is that of Endogenous retrovirus group K member 10 Pol protein (ERVK-10) from Homo sapiens (Human).